The primary structure comprises 128 residues: Saitohin (128 aa).

Residues 77 to 128 are disordered; the sequence is SYSSEESSRNGAEQGRQLSIEGPFQGQNCPSHPAAALPLPMRGESQATSCQV.

As to quaternary structure, interacts with PRDX6.

The protein resides in the cytoplasm. Its subcellular location is the nucleus. This Gorilla gorilla gorilla (Western lowland gorilla) protein is Saitohin (STH).